Reading from the N-terminus, the 92-residue chain is Bombyxin A-1 (92 aa).

The first 19 residues, 1-19 (MKILLAIALMLSTVMWVST), serve as a signal peptide directing secretion. Gln20 is modified (pyrrolidone carboxylic acid). Disulfide bonds link Cys29/Cys79, Cys41/Cys92, and Cys78/Cys83. A propeptide spans 50–70 (SGAQFASYGSAWLMPYSEGRG) (c peptide like).

The protein belongs to the insulin family. As to quaternary structure, heterodimer of a B chain and an A chain linked by two disulfide bonds.

It localises to the secreted. Brain peptide responsible for activation of prothoracic glands to produce ecdysone in insects. The protein is Bombyxin A-1 (BBXA1) of Bombyx mori (Silk moth).